The sequence spans 259 residues: Triosephosphate isomerase (259 aa).

Position 10–12 (10–12 (NWK)) interacts with substrate. The active-site Electrophile is His-102. Glu-172 (proton acceptor) is an active-site residue. Residues Gly-178, Ser-218, and 239 to 240 (GG) each bind substrate.

The protein belongs to the triosephosphate isomerase family. Homodimer.

It is found in the cytoplasm. The catalysed reaction is D-glyceraldehyde 3-phosphate = dihydroxyacetone phosphate. The protein operates within carbohydrate biosynthesis; gluconeogenesis. It functions in the pathway carbohydrate degradation; glycolysis; D-glyceraldehyde 3-phosphate from glycerone phosphate: step 1/1. Its function is as follows. Involved in the gluconeogenesis. Catalyzes stereospecifically the conversion of dihydroxyacetone phosphate (DHAP) to D-glyceraldehyde-3-phosphate (G3P). The sequence is that of Triosephosphate isomerase from Leifsonia xyli subsp. xyli (strain CTCB07).